We begin with the raw amino-acid sequence, 610 residues long: ESX-5 secretion system protein EccA5 (610 aa).

An ATP-binding site is contributed by 357–364 (GPPGTGKT).

This sequence belongs to the CbxX/CfxQ family. Part of the ESX-5 / type VII secretion system (T7SS), which is composed of cytosolic and membrane components.

It is found in the cytoplasm. Its function is as follows. Part of the ESX-5 specialized secretion system, which is responsible for the secretion of EsxN and a number of PE_PGRS and PPE proteins. EccA5 exhibits ATPase activity and may provide energy for the export of ESX-5 substrates. The protein is ESX-5 secretion system protein EccA5 of Mycobacterium marinum (strain ATCC BAA-535 / M).